The chain runs to 373 residues: ATP phosphoribosyltransferase regulatory subunit (373 aa).

It belongs to the class-II aminoacyl-tRNA synthetase family. HisZ subfamily. As to quaternary structure, heteromultimer composed of HisG and HisZ subunits.

It localises to the cytoplasm. It functions in the pathway amino-acid biosynthesis; L-histidine biosynthesis; L-histidine from 5-phospho-alpha-D-ribose 1-diphosphate: step 1/9. Required for the first step of histidine biosynthesis. May allow the feedback regulation of ATP phosphoribosyltransferase activity by histidine. In Rhizobium johnstonii (strain DSM 114642 / LMG 32736 / 3841) (Rhizobium leguminosarum bv. viciae), this protein is ATP phosphoribosyltransferase regulatory subunit.